The primary structure comprises 539 residues: Membrane protein insertase YidC (539 aa).

5 helical membrane passes run 6 to 26 (TLLVLLLALVSFLLFQQWQVA), 341 to 361 (SVIQSFVGNWGVAIICLTFIV), 416 to 436 (LGGCLPLILQMPIFIALYWAL), 454 to 474 (LSAQDPYFILPLLMGGSMFLI), and 495 to 515 (PVMFTFFFLWFPSGLVLYWLV).

The protein belongs to the OXA1/ALB3/YidC family. Type 1 subfamily. As to quaternary structure, interacts with the Sec translocase complex via SecD. Specifically interacts with transmembrane segments of nascent integral membrane proteins during membrane integration.

The protein localises to the cell inner membrane. Its function is as follows. Required for the insertion and/or proper folding and/or complex formation of integral membrane proteins into the membrane. Involved in integration of membrane proteins that insert both dependently and independently of the Sec translocase complex, as well as at least some lipoproteins. Aids folding of multispanning membrane proteins. The chain is Membrane protein insertase YidC from Vibrio vulnificus (strain CMCP6).